Here is a 276-residue protein sequence, read N- to C-terminus: Chymotrypsin (276 aa).

A signal peptide spans 1–16; it reads MKVALVVLALFGVSLA. Residues 17 to 45 constitute a propeptide, activation peptide; it reads ASIDNIEIPPSKNIYVEPINQPEVDPSLE. The region spanning 46-272 is the Peptidase S1 domain; the sequence is IVNGQEVVPH…YLNWLQTHSE (227 aa). An intrachain disulfide couples Cys74 to Cys90. Catalysis depends on charge relay system residues His89 and Asp135. N-linked (GlcNAc...) asparagine glycosylation is found at Asn144 and Asn193. 2 cysteine pairs are disulfide-bonded: Cys202/Cys215 and Cys225/Cys250. Catalysis depends on Ser229, which acts as the Charge relay system.

Belongs to the peptidase S1 family. In terms of tissue distribution, expressed in larval carcasses and gut, and adult gut.

It is found in the secreted. Its subcellular location is the extracellular space. It catalyses the reaction Preferential cleavage: Tyr-|-Xaa, Trp-|-Xaa, Phe-|-Xaa, Leu-|-Xaa.. In terms of biological role, serine protease with chymotryptic and collagenolytic activities. This chain is Chymotrypsin, found in Phaedon cochleariae (Mustard beetle).